We begin with the raw amino-acid sequence, 157 residues long: Phosphopantetheine adenylyltransferase (157 aa).

S9 contacts substrate. ATP-binding positions include 9-10 and H17; that span reads SF. The substrate site is built by K41, L73, and K87. ATP-binding positions include 88–90, E98, and 123–129; these read GLR and YSFLSSS.

It belongs to the bacterial CoaD family. As to quaternary structure, homohexamer. It depends on Mg(2+) as a cofactor.

It is found in the cytoplasm. The enzyme catalyses (R)-4'-phosphopantetheine + ATP + H(+) = 3'-dephospho-CoA + diphosphate. The protein operates within cofactor biosynthesis; coenzyme A biosynthesis; CoA from (R)-pantothenate: step 4/5. Functionally, reversibly transfers an adenylyl group from ATP to 4'-phosphopantetheine, yielding dephospho-CoA (dPCoA) and pyrophosphate. This chain is Phosphopantetheine adenylyltransferase, found in Alkaliphilus oremlandii (strain OhILAs) (Clostridium oremlandii (strain OhILAs)).